We begin with the raw amino-acid sequence, 137 residues long: Structural protein A137R (137 aa).

The protein belongs to the asfivirus A137R family. Interacts with host TBK1.

The protein localises to the virion. Its subcellular location is the host cytoplasm. Its function is as follows. Plays a role in the inhibition of the host innate immune response. Mechanistically, promotes the autophagy-mediated lysosomal degradation of host TBK1 and affects IRF3 nuclear translocation to block type I IFN production. This African swine fever virus (isolate Warthog/Namibia/Wart80/1980) (ASFV) protein is Structural protein A137R.